The primary structure comprises 323 residues: Acetyl esterase (323 aa).

An Involved in the stabilization of the negatively charged intermediate by the formation of the oxyanion hole motif is present at residues 91–93 (HGG). Catalysis depends on residues Ser-165, Asp-262, and His-292.

Belongs to the 'GDXG' lipolytic enzyme family. In terms of assembly, homodimer. Interacts with MalT and MelA.

It localises to the cytoplasm. Its function is as follows. Displays esterase activity towards short chain fatty esters (acyl chain length of up to 8 carbons). Able to hydrolyze triacetylglycerol (triacetin) and tributyrylglycerol (tributyrin), but not trioleylglycerol (triolein) or cholesterol oleate. Negatively regulates MalT activity by antagonizing maltotriose binding. Inhibits MelA galactosidase activity. The chain is Acetyl esterase from Salmonella dublin (strain CT_02021853).